Reading from the N-terminus, the 98-residue chain is NADH-ubiquinone oxidoreductase chain 4L (98 aa).

Transmembrane regions (helical) follow at residues 1–21 (MSLVYMNIMMAFTVSLTGLLM), 29–49 (SLLCLEGMMLSLFILATLMIL), and 61–81 (IILLVFAACEAALGLSLLVMV).

Belongs to the complex I subunit 4L family. Core subunit of respiratory chain NADH dehydrogenase (Complex I) which is composed of 45 different subunits.

Its subcellular location is the mitochondrion inner membrane. It catalyses the reaction a ubiquinone + NADH + 5 H(+)(in) = a ubiquinol + NAD(+) + 4 H(+)(out). Its function is as follows. Core subunit of the mitochondrial membrane respiratory chain NADH dehydrogenase (Complex I) which catalyzes electron transfer from NADH through the respiratory chain, using ubiquinone as an electron acceptor. Part of the enzyme membrane arm which is embedded in the lipid bilayer and involved in proton translocation. This chain is NADH-ubiquinone oxidoreductase chain 4L (MT-ND4L), found in Ovis aries (Sheep).